The primary structure comprises 52 residues: uncharacterized protein (52 aa).

Positions 24 to 52 are disordered; that stretch reads LRENPSKNVRTIPDAGDENSSFGHARVIA.

This is an uncharacterized protein from Treponema pallidum (strain Nichols).